Here is a 20-residue protein sequence, read N- to C-terminus: uncharacterized protein (20 aa).

This is an uncharacterized protein from Serratia marcescens.